Here is a 789-residue protein sequence, read N- to C-terminus: Bifunctional purine biosynthetic protein PUR2,5 (789 aa).

The GARS stretch occupies residues 1–428 (MEKINVLVVG…NRTDIAHRAF (428 aa)). Residues 114 to 321 (KDFMKKHNIP…LLELMLATVE (208 aa)) form the ATP-grasp domain. 140 to 201 (IANSSHNLVI…EEFLEGDELS (62 aa)) serves as a coordination point for ATP. Mg(2+) is bound by residues E291 and N293. The tract at residues 438 to 773 (LTYEDAGVSV…TVYTIGKLVE (336 aa)) is AIRS.

In the N-terminal section; belongs to the GARS family. The protein in the C-terminal section; belongs to the AIR synthase family. Mg(2+) is required as a cofactor. Mn(2+) serves as cofactor.

It localises to the cytoplasm. The protein resides in the cytosol. It carries out the reaction 2-formamido-N(1)-(5-O-phospho-beta-D-ribosyl)acetamidine + ATP = 5-amino-1-(5-phospho-beta-D-ribosyl)imidazole + ADP + phosphate + H(+). The enzyme catalyses 5-phospho-beta-D-ribosylamine + glycine + ATP = N(1)-(5-phospho-beta-D-ribosyl)glycinamide + ADP + phosphate + H(+). It participates in purine metabolism; IMP biosynthesis via de novo pathway; 5-amino-1-(5-phospho-D-ribosyl)imidazole from N(2)-formyl-N(1)-(5-phospho-D-ribosyl)glycinamide: step 2/2. Its pathway is purine metabolism; IMP biosynthesis via de novo pathway; N(1)-(5-phospho-D-ribosyl)glycinamide from 5-phospho-alpha-D-ribose 1-diphosphate: step 2/2. Functionally, catalyzes the second and fifth step in the 'de novo' purine biosynthesis pathway; contains phosphoribosylamine--glycine ligase (GARS) and phosphoribosylformylglycinamidine cyclo-ligase (AIRS) activities. The sequence is that of Bifunctional purine biosynthetic protein PUR2,5 from Pichia angusta (Yeast).